The sequence spans 546 residues: Chaperonin GroEL 6 (546 aa).

Residues 30–33 (TLGP), Lys-51, 87–91 (DGTTT), Gly-415, and Asp-496 each bind ATP.

This sequence belongs to the chaperonin (HSP60) family. As to quaternary structure, forms a cylinder of 14 subunits composed of two heptameric rings stacked back-to-back. Interacts with the co-chaperonin GroES.

Its subcellular location is the cytoplasm. It catalyses the reaction ATP + H2O + a folded polypeptide = ADP + phosphate + an unfolded polypeptide.. In terms of biological role, together with its co-chaperonin GroES, plays an essential role in assisting protein folding. The GroEL-GroES system forms a nano-cage that allows encapsulation of the non-native substrate proteins and provides a physical environment optimized to promote and accelerate protein folding. The protein is Chaperonin GroEL 6 of Bradyrhizobium diazoefficiens (strain JCM 10833 / BCRC 13528 / IAM 13628 / NBRC 14792 / USDA 110).